A 204-amino-acid chain; its full sequence is ATP-dependent Clp protease proteolytic subunit (204 aa).

Ser-102 serves as the catalytic Nucleophile. His-127 is a catalytic residue.

It belongs to the peptidase S14 family. Fourteen ClpP subunits assemble into 2 heptameric rings which stack back to back to give a disk-like structure with a central cavity, resembling the structure of eukaryotic proteasomes.

It is found in the cytoplasm. It catalyses the reaction Hydrolysis of proteins to small peptides in the presence of ATP and magnesium. alpha-casein is the usual test substrate. In the absence of ATP, only oligopeptides shorter than five residues are hydrolyzed (such as succinyl-Leu-Tyr-|-NHMec, and Leu-Tyr-Leu-|-Tyr-Trp, in which cleavage of the -Tyr-|-Leu- and -Tyr-|-Trp bonds also occurs).. In terms of biological role, cleaves peptides in various proteins in a process that requires ATP hydrolysis. Has a chymotrypsin-like activity. Plays a major role in the degradation of misfolded proteins. In Neisseria gonorrhoeae (strain ATCC 700825 / FA 1090), this protein is ATP-dependent Clp protease proteolytic subunit.